Here is a 129-residue protein sequence, read N- to C-terminus: Small ribosomal subunit protein uS11 (129 aa).

It belongs to the universal ribosomal protein uS11 family. Part of the 30S ribosomal subunit. Interacts with proteins S7 and S18. Binds to IF-3.

In terms of biological role, located on the platform of the 30S subunit, it bridges several disparate RNA helices of the 16S rRNA. Forms part of the Shine-Dalgarno cleft in the 70S ribosome. In Bacillus cytotoxicus (strain DSM 22905 / CIP 110041 / 391-98 / NVH 391-98), this protein is Small ribosomal subunit protein uS11.